The sequence spans 129 residues: Small ribosomal subunit protein uS11 (129 aa).

Belongs to the universal ribosomal protein uS11 family. Part of the 30S ribosomal subunit. Interacts with proteins S7 and S18. Binds to IF-3.

Located on the platform of the 30S subunit, it bridges several disparate RNA helices of the 16S rRNA. Forms part of the Shine-Dalgarno cleft in the 70S ribosome. This is Small ribosomal subunit protein uS11 from Tolumonas auensis (strain DSM 9187 / NBRC 110442 / TA 4).